Reading from the N-terminus, the 607-residue chain is Dopamine receptor 3 (607 aa).

The Extracellular segment spans residues 1-23 (MLAGQHHVTDIESPLMVVLWRVA). A helical transmembrane segment spans residues 24-44 (AGVFLPLVPTMAVFGNVLVIM). Over 45–58 (SVFRERSLQTVTNM) the chain is Cytoplasmic. A helical transmembrane segment spans residues 59 to 79 (LIVSLAVSDFMVAIGVMSFGV). Residues 80–96 (YYEWNDFKWGLGSFFCH) are Extracellular-facing. Residues C95 and C173 are joined by a disulfide bond. The helical transmembrane segment at 97 to 117 (VYQALDVACSTASILNLLAIS) threads the bilayer. Residues 118 to 141 (LDRYIAIGHPISYAQYGARGGRAM) lie on the Cytoplasmic side of the membrane. A helical membrane pass occupies residues 142–162 (ISITIVWGVSVAVALPLLLGV). At 163–182 (NPMEENDLQECELANPYFNM) the chain is on the extracellular side. Residues 183-203 (ISSIFSFFIPCIAMIILYTII) form a helical membrane-spanning segment. Residues 204–523 (FRRLRQRERA…TKQMRREHKA (320 aa)) are Cytoplasmic-facing. The tract at residues 402–435 (VPSIQDEKKLSQKSNDLPFSHQNGTHKQKLLPNP) is disordered. Positions 413 to 424 (QKSNDLPFSHQN) are enriched in polar residues. A helical membrane pass occupies residues 524-544 (TVTLAVVLAVFLFCWLPFFVL). Residues 545–558 (HLSNSICLIIDENS) lie on the Extracellular side of the membrane. A helical membrane pass occupies residues 559–579 (ACVGFLPLYLATWLGYLNSSL). Residues 580–607 (NPLIYTVFDQRFRNAFRNILSCGIFKKR) lie on the Cytoplasmic side of the membrane.

It belongs to the G-protein coupled receptor 1 family. As to expression, expressed in the neurons of the head, ventral cord and tail with weak expression observed in body wall muscles and PVD neurons. In the ventral cord, expressed strongly in GABAergic neurons with weaker expression in cholinergic motor neurons. Expressed in cholinergic SIA neurons and octopaminergic RIC neurons. In males, expressed in the dorsal and ventral spicule protractor and retractor muscles, and the sensory post-cloacal sensilla B (PCB) neuron. Expressed in the head acetylcholine neurons. Expressed in the AVA, AVB, AVD and AVE command interneurons. Expressed in premotor interneurons.

Its subcellular location is the cell membrane. Functionally, G-protein coupled receptor which binds to the neurotransmitter dopamine with high affinity leading to the activation of an associated G-protein and downstream signaling pathways. Couples to G-proteins to inhibit adenylate cyclase (AC) activity and cAMP production. Antagonizes the D1-like dopamine receptor dop-1 to negatively regulate the rate of locomotion. Negatively regulates locomotion through the activation of goa-1 subunit proteins which inactivates the unc-77/nca-1 and nca-2 ion-channels in the command interneurons. Inhibits early-stage swimming by modulating the unc-77/nca-1 and nca-2 ion channels of premotor interneurons. In GABAergic, RIC, and SIA neurons, antagonizes the function of dop-1 to play a role in behavioral plasticity and regulate the decision-making process when conflicting alternatives are present. Antagonizes octopamine signaling in response to food by promoting the dopamine-mediated suppression of crh-1/CREB1 transcription factor activation in cholinergic SIA neurons. This is most likely in association with the G(o)-alpha G-protein subunit goa-1. Promotes male mating behavior by antagonizing acetylcholine signaling to control the protrusion of copulatory spicules from the tail of males during hermaphrodite vulval location. Under mitochondria stress, plays a role in bacterial preference, resulting in learned avoidance behavior. This is Dopamine receptor 3 from Caenorhabditis elegans.